A 329-amino-acid chain; its full sequence is Malate dehydrogenase (329 aa).

12–18 serves as a coordination point for NAD(+); that stretch reads GAAGQIG. Arg-95 and Arg-101 together coordinate substrate. Residues Asn-108, Gln-115, and 132 to 134 each bind NAD(+); that span reads VGN. Substrate is bound by residues Asn-134 and Arg-165. His-190 serves as the catalytic Proton acceptor.

The protein belongs to the LDH/MDH superfamily. MDH type 2 family.

It carries out the reaction (S)-malate + NAD(+) = oxaloacetate + NADH + H(+). In terms of biological role, catalyzes the reversible oxidation of malate to oxaloacetate. This is Malate dehydrogenase from Herminiimonas arsenicoxydans.